A 512-amino-acid polypeptide reads, in one-letter code: ATP synthase subunit alpha (512 aa).

Residue 170-177 (GDRQTGKT) coordinates ATP.

This sequence belongs to the ATPase alpha/beta chains family. F-type ATPases have 2 components, CF(1) - the catalytic core - and CF(0) - the membrane proton channel. CF(1) has five subunits: alpha(3), beta(3), gamma(1), delta(1), epsilon(1). CF(0) has three main subunits: a(1), b(2) and c(9-12). The alpha and beta chains form an alternating ring which encloses part of the gamma chain. CF(1) is attached to CF(0) by a central stalk formed by the gamma and epsilon chains, while a peripheral stalk is formed by the delta and b chains.

It is found in the cell inner membrane. The catalysed reaction is ATP + H2O + 4 H(+)(in) = ADP + phosphate + 5 H(+)(out). Its function is as follows. Produces ATP from ADP in the presence of a proton gradient across the membrane. The alpha chain is a regulatory subunit. This Solibacter usitatus (strain Ellin6076) protein is ATP synthase subunit alpha.